The chain runs to 374 residues: o-succinylbenzoate synthase (374 aa).

Catalysis depends on lysine 164, which acts as the Proton donor. Residues aspartate 189, glutamate 214, and aspartate 239 each coordinate Mg(2+). Lysine 263 functions as the Proton acceptor in the catalytic mechanism.

Belongs to the mandelate racemase/muconate lactonizing enzyme family. MenC type 2 subfamily. Homodimer. A divalent metal cation is required as a cofactor.

It carries out the reaction (1R,6R)-6-hydroxy-2-succinyl-cyclohexa-2,4-diene-1-carboxylate = 2-succinylbenzoate + H2O. The protein operates within quinol/quinone metabolism; 1,4-dihydroxy-2-naphthoate biosynthesis; 1,4-dihydroxy-2-naphthoate from chorismate: step 4/7. Its pathway is quinol/quinone metabolism; menaquinone biosynthesis. Converts 2-succinyl-6-hydroxy-2,4-cyclohexadiene-1-carboxylate (SHCHC) to 2-succinylbenzoate (OSB). Also acts as a N-succinylamino acid racemase (NSAR) that catalyzes the racemization of N-succinyl-L-phenylglycine. L.innocua has the menaquinone synthesis pathway, indicating that the species requires OSBS activity. However, the NSAR/OSBS is not encoded in the menaquinone operon, raising the possibility that both NSAR and OSBS are biological functions. The sequence is that of o-succinylbenzoate synthase from Listeria innocua serovar 6a (strain ATCC BAA-680 / CLIP 11262).